The chain runs to 395 residues: Immunoglobulin heavy constant gamma 2 (395 aa).

Residues 1–98 (ASTKGPSVFP…PSNTKVDKTV (98 aa)) form a CH1 region. At 1–346 (ASTKGPSVFP…DGELDGLWTT (346 aa)) the chain is on the extracellular side. Ig-like domains lie at 6–99 (PSVF…KTVE), 117–216 (PSVF…KTIS), and 225–321 (PQVY…KSLS). The cysteines at positions 27 and 83 are disulfide-linked. Positions 99–110 (ERKCCVECPPCP) are hinge. Positions 111–219 (APPVAGPSVF…PIEKTISKTK (109 aa)) are CH2. 2 disulfides stabilise this stretch: Cys140-Cys200 and Cys246-Cys304. Asn176 carries an N-linked (GlcNAc...) (complex) asparagine glycan. A CH3 region spans residues 220 to 326 (GQPREPQVYT…QKSLSLSPEL (107 aa)). The chain crosses the membrane as a helical span at residues 347–367 (ITIFITLFLLSVCYSATITFF). The Cytoplasmic portion of the chain corresponds to 368–395 (KVKWIFSSVVDLKQTIVPDYRNMIRQGA).

As to quaternary structure, immunoglobulins are composed of two identical heavy chains and two identical light chains; disulfide-linked. Post-translationally, glycosylation on Asn-176 is required for interaction with Fc receptors and ability to activate the complement pathway. (Microbial infection) Deglycosylation on Asn-176 by S.pyogenes EndoS or Endos2 endoglucosidases prevents interaction between immunoglobulin-gamma (IgG) and Fc receptors, impairing ability to activate the complement pathway.

Its subcellular location is the secreted. It is found in the cell membrane. Constant region of immunoglobulin heavy chains. Immunoglobulins, also known as antibodies, are membrane-bound or secreted glycoproteins produced by B lymphocytes. In the recognition phase of humoral immunity, the membrane-bound immunoglobulins serve as receptors which, upon binding of a specific antigen, trigger the clonal expansion and differentiation of B lymphocytes into immunoglobulins-secreting plasma cells. Secreted immunoglobulins mediate the effector phase of humoral immunity, which results in the elimination of bound antigens. The antigen binding site is formed by the variable domain of one heavy chain, together with that of its associated light chain. Thus, each immunoglobulin has two antigen binding sites with remarkable affinity for a particular antigen. The variable domains are assembled by a process called V-(D)-J rearrangement and can then be subjected to somatic hypermutations which, after exposure to antigen and selection, allow affinity maturation for a particular antigen. The protein is Immunoglobulin heavy constant gamma 2 of Homo sapiens (Human).